Here is a 117-residue protein sequence, read N- to C-terminus: Large ribosomal subunit protein uL18 (117 aa).

Belongs to the universal ribosomal protein uL18 family. Part of the 50S ribosomal subunit; part of the 5S rRNA/L5/L18/L25 subcomplex. Contacts the 5S and 23S rRNAs.

Its function is as follows. This is one of the proteins that bind and probably mediate the attachment of the 5S RNA into the large ribosomal subunit, where it forms part of the central protuberance. The protein is Large ribosomal subunit protein uL18 of Pectobacterium atrosepticum (strain SCRI 1043 / ATCC BAA-672) (Erwinia carotovora subsp. atroseptica).